Reading from the N-terminus, the 103-residue chain is Large ribosomal subunit protein bL21 (103 aa).

This sequence belongs to the bacterial ribosomal protein bL21 family. In terms of assembly, part of the 50S ribosomal subunit. Contacts protein L20.

Functionally, this protein binds to 23S rRNA in the presence of protein L20. This is Large ribosomal subunit protein bL21 from Shewanella woodyi (strain ATCC 51908 / MS32).